The chain runs to 1360 residues: DNA-directed RNA polymerase subunit beta (1360 aa).

Belongs to the RNA polymerase beta chain family. In terms of assembly, the RNAP catalytic core consists of 2 alpha, 1 beta, 1 beta' and 1 omega subunit. When a sigma factor is associated with the core the holoenzyme is formed, which can initiate transcription.

It catalyses the reaction RNA(n) + a ribonucleoside 5'-triphosphate = RNA(n+1) + diphosphate. Functionally, DNA-dependent RNA polymerase catalyzes the transcription of DNA into RNA using the four ribonucleoside triphosphates as substrates. The chain is DNA-directed RNA polymerase subunit beta from Desulfotalea psychrophila (strain LSv54 / DSM 12343).